We begin with the raw amino-acid sequence, 217 residues long: Uracil phosphoribosyltransferase (217 aa).

5-phospho-alpha-D-ribose 1-diphosphate-binding positions include Arg84, Arg109, and 137–145; that span reads DPMLATGGS. Residues Ile202 and 207–209 each bind uracil; that span reads GDA. Asp208 serves as a coordination point for 5-phospho-alpha-D-ribose 1-diphosphate.

This sequence belongs to the UPRTase family. Requires Mg(2+) as cofactor.

The enzyme catalyses UMP + diphosphate = 5-phospho-alpha-D-ribose 1-diphosphate + uracil. Its pathway is pyrimidine metabolism; UMP biosynthesis via salvage pathway; UMP from uracil: step 1/1. Its activity is regulated as follows. Allosterically activated by GTP. Catalyzes the conversion of uracil and 5-phospho-alpha-D-ribose 1-diphosphate (PRPP) to UMP and diphosphate. The polypeptide is Uracil phosphoribosyltransferase (Synechococcus elongatus (strain ATCC 33912 / PCC 7942 / FACHB-805) (Anacystis nidulans R2)).